The sequence spans 71 residues: Large ribosomal subunit protein bL31 (71 aa).

Zn(2+)-binding residues include C16, C18, C37, and C40.

This sequence belongs to the bacterial ribosomal protein bL31 family. Type A subfamily. As to quaternary structure, part of the 50S ribosomal subunit. Requires Zn(2+) as cofactor.

Functionally, binds the 23S rRNA. The protein is Large ribosomal subunit protein bL31 of Nitratidesulfovibrio vulgaris (strain ATCC 29579 / DSM 644 / CCUG 34227 / NCIMB 8303 / VKM B-1760 / Hildenborough) (Desulfovibrio vulgaris).